Consider the following 651-residue polypeptide: MSEKIYPVTKPVKARALIDKEKYLKWYEESVENPDKFWGKHGKRIDWFKPYTKVKNTSFTGKVSIKWFEDGQTNVSYNCIDRHLKTNGDQVAIIWEGDNPYIDKKVTYNELYEHVCRMANVLKKHGVKKGDRVTIYMPMIPEAAYAMLACARIGAVHSVVFGGFSPEALAGRIVDCESTFVITCDEGLRGGKPVPLKDNTDTAIHIAARQHVHVSKVLVVRRTGGKTGWAPGRDLWHHQEIATVKPECPPVKMKAEDPLFILYTSGSTGKPKGVLHTTGGYLVYAAMTHEYVFDYHDGDVYWCTADVGWVTGHSYIVYGPLANCATTLMFEGVPNFPDQGRFWEVIDKHKVNIFYTAPTAIRSLMGAGDDFVTRSSRSSLRLLGTVGEPINPEAWEWYYNVVGDKRCPVIDTWWQTETGGHMITPLPGAIDLKPGSATVPFFGIKPELVDNEGKVLEGAADGNLCITDSWPGQMRTVYGDHDRFIQTYFSTYKGKYFTGDGCRRDADGYYWITGRVDDVLNVSGHRLGTAEVESALVSHNLVSEAAVVGYPHPIKGQGIYCYVTLMAGHEGTDTLRQDLVKHVRAEIGPIAAPDKIQFAPGLPKTRSGKIMRRILRKIAEDDFGALGDTSTLADPAVVDDLIANRQNKATA.

CoA contacts are provided by residues 189–192 (RGGK), T311, and N335. Residues 387 to 389 (GEP), 411 to 416 (DTWWQT), D500, and R515 contribute to the ATP site. S523 provides a ligand contact to CoA. R526 serves as a coordination point for ATP. 3 residues coordinate Mg(2+): V537, H539, and V542. R584 contacts CoA. K609 carries the post-translational modification N6-acetyllysine.

It belongs to the ATP-dependent AMP-binding enzyme family. The cofactor is Mg(2+). Acetylated. Deacetylation by the SIR2-homolog deacetylase activates the enzyme.

It catalyses the reaction acetate + ATP + CoA = acetyl-CoA + AMP + diphosphate. Catalyzes the conversion of acetate into acetyl-CoA (AcCoA), an essential intermediate at the junction of anabolic and catabolic pathways. AcsA undergoes a two-step reaction. In the first half reaction, AcsA combines acetate with ATP to form acetyl-adenylate (AcAMP) intermediate. In the second half reaction, it can then transfer the acetyl group from AcAMP to the sulfhydryl group of CoA, forming the product AcCoA. The sequence is that of Acetyl-coenzyme A synthetase from Rhizobium leguminosarum bv. trifolii (strain WSM2304).